Here is a 602-residue protein sequence, read N- to C-terminus: Potassium voltage-gated channel subfamily A member 5 (602 aa).

The segment at 1–202 (MEISLVPLEN…FYQLGDEAME (202 aa)) is tetramerization domain. Residues 1-238 (MEISLVPLEN…LIFEYPESSG (238 aa)) lie on the Cytoplasmic side of the membrane. Positions 58–107 (EDANQGGRPLPPMAQELPQPRRLSAEDEEGEGDPGLGTVEEDQAPQDAGS) are disordered. Residue Ser81 is modified to Phosphoserine; by CK2 and PKA. Lys212 is covalently cross-linked (Glycyl lysine isopeptide (Lys-Gly) (interchain with G-Cter in SUMO)). The helical transmembrane segment at 239–260 (SARAIAIVSVLVILISIITFCL) threads the bilayer. The Extracellular portion of the chain corresponds to 261-314 (ETLPEFRDERELLRHPPVPPQPPAPAPGINGSVSGALSSGPTVAPLLPRTLADP). Residues 315 to 336 (FFIVETTCVIWFTFELLVRFFA) traverse the membrane as a helical segment. A lipid anchor (S-palmitoyl cysteine) is attached at Cys337. Over 337–347 (CPSKAEFSRNI) the chain is Cytoplasmic. The helical transmembrane segment at 348–368 (MNIIDVVAIFPYFITLGTELA) threads the bilayer. The Extracellular portion of the chain corresponds to 369 to 384 (EQQPGGGGQNGQQAMS). The helical; Voltage-sensor transmembrane segment at 385 to 405 (LAILRVIRLVRVFRIFKLSRH) threads the bilayer. The Cytoplasmic portion of the chain corresponds to 406–420 (SKGLQILGKTLQASM). An S4-S5 linker region spans residues 407–420 (KGLQILGKTLQASM). Residues 421-442 (RELGLLIFFLFIGVILFSSAVY) form a helical membrane-spanning segment. Over 443–456 (FAEADNHGSHFSSI) the chain is Extracellular. An intramembrane region (helical) is located at residues 457–468 (PDAFWWAVVTMT). The Selectivity filter signature appears at 469-474 (TVGYGD). An intramembrane segment occupies 469–476 (TVGYGDMR). Over 477–483 (PITVGGK) the chain is Extracellular. A helical transmembrane segment spans residues 484–512 (IVGSLCAIAGVLTIALPVPVIVSNFNYFY). Topologically, residues 513–602 (HRETDHEEQA…CLDTSRETDL (90 aa)) are cytoplasmic. Basic and acidic residues predominate over residues 523-536 (ALKEEQGNQRRESG). Residues 523 to 543 (ALKEEQGNQRRESGLDTGGQR) are disordered. Lys525 is covalently cross-linked (Glycyl lysine isopeptide (Lys-Gly) (interchain with G-Cter in SUMO)). Phosphoserine; by PKA is present on residues Ser535, Ser546, and Ser569. A PDZ-binding motif is present at residues 600–602 (TDL).

This sequence belongs to the potassium channel family. A (Shaker) (TC 1.A.1.2) subfamily. Kv1.5/KCNA5 sub-subfamily. Homotetramer and heterotetramer of potassium channel proteins. Interacts with DLG1, which enhances channel currents. Forms a ternary complex with DLG1 and CAV3. Interacts with KCNAB1. Interacts with UBE2I. Interacts with XIRP2; the interaction is required for normal action potential configuration in the heart. Post-translationally, glycosylated. In terms of processing, sumoylated on Lys-212, and Lys-525, preferentially with SUMO3. Sumoylation regulates the voltage sensitivity of the channel. In terms of tissue distribution, expressed equally in atrium, ventricle, aorta and skeletal muscle. Weaker expression in brain.

The protein resides in the cell membrane. It carries out the reaction K(+)(in) = K(+)(out). Its function is as follows. Voltage-gated potassium channel that mediates transmembrane potassium transport in excitable membranes. Forms tetrameric potassium-selective channels through which potassium ions pass in accordance with their electrochemical gradient. The channel alternates between opened and closed conformations in response to the voltage difference across the membrane. Can form functional homotetrameric channels and heterotetrameric channels that contain variable proportions of KCNA1, KCNA2, KCNA4, KCNA5, and possibly other family members as well; channel properties depend on the type of alpha subunits that are part of the channel. Channel properties are modulated by cytoplasmic beta subunits that regulate the subcellular location of the alpha subunits and promote rapid inactivation. Homotetrameric channels display rapid activation and slow inactivation. Required for normal electrical conduction including formation of the infranodal ventricular conduction system and normal action potential configuration, as a result of its interaction with XIRP2. May play a role in regulating the secretion of insulin in normal pancreatic islets. The chain is Potassium voltage-gated channel subfamily A member 5 (Kcna5) from Rattus norvegicus (Rat).